Here is a 308-residue protein sequence, read N- to C-terminus: Oxygen-dependent coproporphyrinogen-III oxidase (308 aa).

Ser-92 lines the substrate pocket. Positions 96 and 106 each coordinate a divalent metal cation. The Proton donor role is filled by His-106. Substrate is bound at residue Asn-108–Arg-110. The a divalent metal cation site is built by His-145 and His-175. The segment at Tyr-240–Glu-275 is important for dimerization. Gly-258–Arg-260 is a substrate binding site.

This sequence belongs to the aerobic coproporphyrinogen-III oxidase family. As to quaternary structure, homodimer. Requires a divalent metal cation as cofactor.

It is found in the cytoplasm. The enzyme catalyses coproporphyrinogen III + O2 + 2 H(+) = protoporphyrinogen IX + 2 CO2 + 2 H2O. It participates in porphyrin-containing compound metabolism; protoporphyrin-IX biosynthesis; protoporphyrinogen-IX from coproporphyrinogen-III (O2 route): step 1/1. Its function is as follows. Involved in the heme biosynthesis. Catalyzes the aerobic oxidative decarboxylation of propionate groups of rings A and B of coproporphyrinogen-III to yield the vinyl groups in protoporphyrinogen-IX. This Salmonella paratyphi A (strain ATCC 9150 / SARB42) protein is Oxygen-dependent coproporphyrinogen-III oxidase.